A 582-amino-acid chain; its full sequence is Threonine--tRNA ligase (582 aa).

Positions 185–478 (DHRKLGKELE…LTEQYGGAFP (294 aa)) are catalytic. Residues cysteine 278, histidine 329, and histidine 455 each coordinate Zn(2+).

Belongs to the class-II aminoacyl-tRNA synthetase family. In terms of assembly, homodimer. It depends on Zn(2+) as a cofactor.

Its subcellular location is the cytoplasm. It catalyses the reaction tRNA(Thr) + L-threonine + ATP = L-threonyl-tRNA(Thr) + AMP + diphosphate + H(+). Functionally, catalyzes the attachment of threonine to tRNA(Thr) in a two-step reaction: L-threonine is first activated by ATP to form Thr-AMP and then transferred to the acceptor end of tRNA(Thr). Also edits incorrectly charged L-seryl-tRNA(Thr). This chain is Threonine--tRNA ligase, found in Dehalococcoides mccartyi (strain ATCC BAA-2266 / KCTC 15142 / 195) (Dehalococcoides ethenogenes (strain 195)).